The following is a 248-amino-acid chain: NAD(P)H-quinone oxidoreductase subunit K (248 aa).

[4Fe-4S] cluster is bound by residues C66, C67, C131, and C162.

It belongs to the complex I 20 kDa subunit family. As to quaternary structure, NDH-1 can be composed of about 15 different subunits; different subcomplexes with different compositions have been identified which probably have different functions. [4Fe-4S] cluster serves as cofactor.

The protein localises to the cellular thylakoid membrane. The catalysed reaction is a plastoquinone + NADH + (n+1) H(+)(in) = a plastoquinol + NAD(+) + n H(+)(out). It catalyses the reaction a plastoquinone + NADPH + (n+1) H(+)(in) = a plastoquinol + NADP(+) + n H(+)(out). NDH-1 shuttles electrons from an unknown electron donor, via FMN and iron-sulfur (Fe-S) centers, to quinones in the respiratory and/or the photosynthetic chain. The immediate electron acceptor for the enzyme in this species is believed to be plastoquinone. Couples the redox reaction to proton translocation, and thus conserves the redox energy in a proton gradient. Cyanobacterial NDH-1 also plays a role in inorganic carbon-concentration. The protein is NAD(P)H-quinone oxidoreductase subunit K of Synechococcus sp. (strain WH7803).